We begin with the raw amino-acid sequence, 135 residues long: Calcium-binding protein KIC (135 aa).

The 36-residue stretch at 74 to 109 folds into the EF-hand domain; it reads MSKEDAQGMVREGDLDGDGALNQTEFCVLMVRLSPE. Positions 87, 89, 91, and 98 each coordinate Ca(2+).

In terms of assembly, interacts with KCBP (via C-terminus). KIC and calmodulin show competitive binding to KCBP. Interacts with CML42. Binds to ABCG36. Expressed in stems, leaves and flowers.

In terms of biological role, calcium-binding regulatory protein that interacts with kinesin motor protein KCBP in a calcium-dependent manner. Inhibits KCBP microtubule binding activity and microtubule-stimulated ATPase activity. Involved in the regulation of trichome branching through its interaction with KCBP. In Arabidopsis thaliana (Mouse-ear cress), this protein is Calcium-binding protein KIC.